We begin with the raw amino-acid sequence, 676 residues long: DNA ligase (676 aa).

Residues 39–43, 88–91, and E118 each bind NAD(+); these read DYVYD and SLND. Catalysis depends on K120, which acts as the N6-AMP-lysine intermediate. Positions 141, 175, 291, and 315 each coordinate NAD(+). Positions 409, 412, 427, and 432 each coordinate Zn(2+). The 82-residue stretch at 595-676 folds into the BRCT domain; the sequence is EVESPFKDKT…MVDALDASHF (82 aa).

It belongs to the NAD-dependent DNA ligase family. LigA subfamily. Requires Mg(2+) as cofactor. Mn(2+) is required as a cofactor.

It catalyses the reaction NAD(+) + (deoxyribonucleotide)n-3'-hydroxyl + 5'-phospho-(deoxyribonucleotide)m = (deoxyribonucleotide)n+m + AMP + beta-nicotinamide D-nucleotide.. In terms of biological role, DNA ligase that catalyzes the formation of phosphodiester linkages between 5'-phosphoryl and 3'-hydroxyl groups in double-stranded DNA using NAD as a coenzyme and as the energy source for the reaction. It is essential for DNA replication and repair of damaged DNA. The chain is DNA ligase from Enterococcus faecalis (strain ATCC 700802 / V583).